A 109-amino-acid chain; its full sequence is Nucleoid-associated protein swp_1717 (109 aa).

The tract at residues 88–109 (QKDKMAEVTGGMQLPPGMKMPF) is disordered.

Belongs to the YbaB/EbfC family. As to quaternary structure, homodimer.

It localises to the cytoplasm. Its subcellular location is the nucleoid. Functionally, binds to DNA and alters its conformation. May be involved in regulation of gene expression, nucleoid organization and DNA protection. The sequence is that of Nucleoid-associated protein swp_1717 from Shewanella piezotolerans (strain WP3 / JCM 13877).